Consider the following 360-residue polypeptide: Mannan endo-1,4-beta-mannosidase (360 aa).

An N-terminal signal peptide occupies residues 1–24; that stretch reads MLKKLAVCLSIVLLLLGAASPISA. The GH26 domain occupies 36–347; that stretch reads QTTKDIMNWL…YQNSWTLNKG (312 aa). Position 129 (H129) interacts with substrate. The active-site Proton donor is the E191. Residues W196 and Y266 each contribute to the substrate site. The active-site Nucleophile is E290.

It belongs to the glycosyl hydrolase 26 family. In terms of assembly, homodimer.

The protein resides in the secreted. It carries out the reaction Random hydrolysis of (1-&gt;4)-beta-D-mannosidic linkages in mannans, galactomannans and glucomannans.. Involved in the degradation of glucomannan. Catalyzes the endo hydrolysis of beta-1,4-linked mannan, galactomannan and glucomannan. This Bacillus subtilis protein is Mannan endo-1,4-beta-mannosidase.